Reading from the N-terminus, the 814-residue chain is Telomere repeats-binding bouquet formation protein 1 (814 aa).

ARM repeat units follow at residues 93–136 and 327–368; these read EMFR…KTSR and GGLP…GMST. 3 disordered regions span residues 461–521, 551–584, and 653–753; these read DQDS…ELKR, STPT…LSDD, and FRRS…KRQN. Residues 488-512 are a coiled coil; that stretch reads EKSKKRKHKQKRENERSDNQETRRE. Composition is skewed to basic and acidic residues over residues 499-521, 565-577, and 679-688; these read RENE…ELKR, IFRH…RNQR, and EHSTSAQEHK. The segment covering 689–699 has biased composition (basic residues); sequence QKSKREKHKLS. Basic and acidic residues predominate over residues 714-741; that stretch reads RPRETYSPDVKQWTDHRHLKKSSEDARS. The 54-residue stretch at 746–799 folds into the Myb-like domain; that stretch reads GRHRKRQNWSDKELCYLTKGVKRFGHSWNTILWKYPFHPGRTNVDLAKKFYHMQ.

The protein belongs to the TERB1 family. In terms of assembly, component of the MAJIN-TERB1-TERB2 complex.

It is found in the chromosome. Its subcellular location is the telomere. It localises to the nucleus inner membrane. Functionally, meiosis-specific telomere-associated protein involved in meiotic telomere attachment to the nucleus inner membrane, a crucial step for homologous pairing and synapsis. Component of the MAJIN-TERB1-TERB2 complex, which promotes telomere cap exchange by mediating attachment of telomeric DNA to the inner nuclear membrane and replacement of the protective cap of telomeric chromosomes: in early meiosis, the MAJIN-TERB1-TERB2 complex associates with telomeric DNA and the shelterin/telosome complex. During prophase, the complex matures and promotes release of the shelterin/telosome complex from telomeric DNA. In the MAJIN-TERB1-TERB2 complex, TERB1 probably mediates association with the shelterin/telosome complex. This chain is Telomere repeats-binding bouquet formation protein 1 (ccdc79), found in Danio rerio (Zebrafish).